The following is a 399-amino-acid chain: Argininosuccinate synthase (399 aa).

9 to 17 (AYSGGLDTS) is a binding site for ATP. Tyr87 provides a ligand contact to L-citrulline. Residue Gly117 coordinates ATP. L-aspartate-binding residues include Thr119, Asn123, and Asp124. An L-citrulline-binding site is contributed by Asn123. The L-citrulline site is built by Arg127, Ser176, Ser185, Glu261, and Tyr273.

It belongs to the argininosuccinate synthase family. Type 1 subfamily. Homotetramer.

The protein resides in the cytoplasm. The catalysed reaction is L-citrulline + L-aspartate + ATP = 2-(N(omega)-L-arginino)succinate + AMP + diphosphate + H(+). It functions in the pathway amino-acid biosynthesis; L-arginine biosynthesis; L-arginine from L-ornithine and carbamoyl phosphate: step 2/3. This Chlorobium chlorochromatii (strain CaD3) protein is Argininosuccinate synthase.